Here is a 57-residue protein sequence, read N- to C-terminus: Probable antitoxin MazE1 (57 aa).

Forms a complex with cognate toxin MazF1.

Its function is as follows. Antitoxin component of a type II toxin-antitoxin (TA) system. This chain is Probable antitoxin MazE1 (mazE1), found in Mycobacterium tuberculosis (strain ATCC 25618 / H37Rv).